The following is a 441-amino-acid chain: Tubulin beta chain, nucleomorph (441 aa).

Gln11, Glu69, Ser138, Gly142, Thr143, Gly144, Asn204, and Asn226 together coordinate GTP. Residue Glu69 participates in Mg(2+) binding.

This sequence belongs to the tubulin family. Dimer of alpha and beta chains. A typical microtubule is a hollow water-filled tube with an outer diameter of 25 nm and an inner diameter of 15 nM. Alpha-beta heterodimers associate head-to-tail to form protofilaments running lengthwise along the microtubule wall with the beta-tubulin subunit facing the microtubule plus end conferring a structural polarity. Microtubules usually have 13 protofilaments but different protofilament numbers can be found in some organisms and specialized cells. It depends on Mg(2+) as a cofactor.

Tubulin is the major constituent of microtubules, a cylinder consisting of laterally associated linear protofilaments composed of alpha- and beta-tubulin heterodimers. Microtubules grow by the addition of GTP-tubulin dimers to the microtubule end, where a stabilizing cap forms. Below the cap, tubulin dimers are in GDP-bound state, owing to GTPase activity of alpha-tubulin. This Guillardia theta (Cryptophyte) protein is Tubulin beta chain, nucleomorph (tubB).